The following is a 426-amino-acid chain: Tyrosine--tRNA ligase (426 aa).

Position 35 (Tyr-35) interacts with L-tyrosine. The 'HIGH' region signature appears at 40-49 (PTAPSLHIGH). L-tyrosine contacts are provided by Tyr-174 and Gln-178. The 'KMSKS' region signature appears at 234–238 (KFGKT). Position 237 (Lys-237) interacts with ATP. The region spanning 358–418 (PRVVDALVAT…WAVIRRGRRA (61 aa)) is the S4 RNA-binding domain.

This sequence belongs to the class-I aminoacyl-tRNA synthetase family. TyrS type 1 subfamily. As to quaternary structure, homodimer.

The protein localises to the cytoplasm. It catalyses the reaction tRNA(Tyr) + L-tyrosine + ATP = L-tyrosyl-tRNA(Tyr) + AMP + diphosphate + H(+). Its function is as follows. Catalyzes the attachment of tyrosine to tRNA(Tyr) in a two-step reaction: tyrosine is first activated by ATP to form Tyr-AMP and then transferred to the acceptor end of tRNA(Tyr). This chain is Tyrosine--tRNA ligase, found in Acidothermus cellulolyticus (strain ATCC 43068 / DSM 8971 / 11B).